The primary structure comprises 270 residues: Lipopolysaccharide core biosynthesis glycosyltransferase LpsC (270 aa).

This sequence belongs to the glycosyltransferase 2 family. WaaE/KdtX subfamily.

Its pathway is bacterial outer membrane biogenesis; LPS core biosynthesis. This is Lipopolysaccharide core biosynthesis glycosyltransferase LpsC (lpsC) from Rhizobium meliloti (strain 1021) (Ensifer meliloti).